The sequence spans 199 residues: Recombination protein RecR (199 aa).

The C4-type zinc-finger motif lies at 58 to 73; the sequence is CKKCFNFTSEDECEIC. The Toprim domain maps to 81-175; sequence KLICVVAETK…KVTRIAYGLP (95 aa).

Belongs to the RecR family.

In terms of biological role, may play a role in DNA repair. It seems to be involved in an RecBC-independent recombinational process of DNA repair. It may act with RecF and RecO. The protein is Recombination protein RecR of Prochlorococcus marinus (strain MIT 9312).